The chain runs to 369 residues: Deacetylase EF_0837 (369 aa).

Residues His-58, His-60, Lys-152, His-186, His-209, and Asp-270 each coordinate Zn(2+). Residue Lys-152 is modified to N6-carboxylysine.

This sequence belongs to the metallo-dependent hydrolases superfamily. Atu3266/EF_0837 deacetylase family. Zn(2+) serves as cofactor.

Functionally, esterase that can catalyze the deacetylation of acetyl-(R)-mandelate, but with very low efficiency (in vitro). This chain is Deacetylase EF_0837, found in Enterococcus faecalis (strain ATCC 700802 / V583).